The sequence spans 151 residues: Globin CTT-X (151 aa).

Residues threonine 6 to glutamate 150 enclose the Globin domain. Heme b-binding residues include histidine 64 and histidine 99.

This sequence belongs to the globin family. In terms of assembly, homodimer.

This chain is Globin CTT-X (CTT-10), found in Chironomus thummi thummi (Midge).